A 983-amino-acid chain; its full sequence is GPI ethanolamine phosphate transferase 2, catalytic subunit (983 aa).

Residues 1–431 (MRLGSGTFAT…SLSAQVAQYD (431 aa)) are Lumenal-facing. N194 is a glycosylation site (N-linked (GlcNAc...) asparagine). A run of 12 helical transmembrane segments spans residues 432–452 (IYSMMVGTVVVLEVLTLLLLS), 471–491 (GFSLLFYLVILVLSAVHVIVC), 506–526 (LAAGGVMVLASALLCVIVSVL), 552–572 (LLILLGTAGHVLSLGASSFVE), 699–719 (VLAALSLLVVFVLVQRGCSPV), 721–741 (KAALALGLLGVYCYRAAIGSV), 752–772 (ISKGIIEARFVYVFVLGILFT), 789–809 (LKTVGLWEIYSGLVLLAALLF), 812–832 (HNLPVLAFSLLIQTLMTKFIW), 879–899 (VEIPAVLLTAFGTYAGPVLWA), 919–939 (ACFCYALICSIPVFTYIVLVT), and 955–975 (LLYEGMHLLITAAVCVFFTAM).

It belongs to the PIGG/PIGN/PIGO family. PIGG subfamily. In terms of assembly, part of the ethanolamine phosphate transferase 2 complex composed by PIGG and PIGF. PIGF is required to stabilize it. Competes with PIGO for the binding of PIGF.

Its subcellular location is the endoplasmic reticulum membrane. Its pathway is glycolipid biosynthesis; glycosylphosphatidylinositol-anchor biosynthesis. Its function is as follows. Catalytic subunit of the ethanolamine phosphate transferase 2 complex that transfers an ethanolamine phosphate (EtNP) from a phosphatidylethanolamine (PE) to the 6-OH position of the second alpha-1,6-linked mannose of a 6-PEtn-alpha-D-Man-(1-&gt;2)-alpha-D-Man-(1-&gt;6)-2-PEtn-alpha-D-Man-(1-&gt;4)-alpha-D-GlcN-(1-&gt;6)-(1-radyl,2-acyl-sn-glycero-3-phospho)-2-acyl-inositol (also termed H7) intermediate to generate a 6-PEtn-alpha-D-Man-(1-&gt;2)-6-PEtn-alpha-D-Man-(1-&gt;6)-2-PEtn-alpha-D-Man-(1-&gt;4)-alpha-D-GlcN-(1-&gt;6)-(1-radyl,2-acyl-sn-glycero-3-phospho)-2-acyl-inositol (also termed H8) and participates in the eleventh step of the glycosylphosphatidylinositol-anchor biosynthesis. This Homo sapiens (Human) protein is GPI ethanolamine phosphate transferase 2, catalytic subunit.